The following is a 98-amino-acid chain: NADH-ubiquinone oxidoreductase chain 4L (98 aa).

The next 3 membrane-spanning stretches (helical) occupy residues 1-21, 26-46, and 61-81; these read MSPIFMNITLAFTISLLGMLV, LMASLLCLEGMMMSLFIMIAL, and IILLVFAACETAVGLALLVSI.

This sequence belongs to the complex I subunit 4L family. As to quaternary structure, core subunit of respiratory chain NADH dehydrogenase (Complex I) which is composed of 45 different subunits.

Its subcellular location is the mitochondrion inner membrane. It catalyses the reaction a ubiquinone + NADH + 5 H(+)(in) = a ubiquinol + NAD(+) + 4 H(+)(out). Core subunit of the mitochondrial membrane respiratory chain NADH dehydrogenase (Complex I) which catalyzes electron transfer from NADH through the respiratory chain, using ubiquinone as an electron acceptor. Part of the enzyme membrane arm which is embedded in the lipid bilayer and involved in proton translocation. This Chlorocebus sabaeus (Green monkey) protein is NADH-ubiquinone oxidoreductase chain 4L (MT-ND4L).